Reading from the N-terminus, the 557-residue chain is Carotenoid-cleaving dioxygenase, mitochondrial (557 aa).

The Fe cation site is built by H203, H263, H334, and H551.

The protein belongs to the carotenoid oxygenase family. Requires Fe(2+) as cofactor.

The protein resides in the mitochondrion. The catalysed reaction is all-trans-beta-carotene + O2 = beta-ionone + all-trans-10'-apo-beta-carotenal. The enzyme catalyses 5-cis-lycopene + O2 = 5-cis-10'-apo-lycopenal + (3E,5E)-6,10-dimethylundeca-3,5,9-trien-2-one. It catalyses the reaction 13-cis-lycopene + O2 = 13-cis-10'-apo-lycopenal + (3E,5E)-6,10-dimethylundeca-3,5,9-trien-2-one. It carries out the reaction lutein + O2 = (3R,6R)-hydroxy-alpha-ionone + (3R)-3-hydroxy-10'-apo-beta-carotenal. The catalysed reaction is lutein + O2 = (3R,6R)-3-hydroxy-10'-apo-alpha-carotenal + (3R)-hydroxy-beta-ionone. The enzyme catalyses all-trans-zeaxanthin + 2 O2 = 4,9-dimethyldodeca-2,4,6,8,10-pentaenedial + 2 (3R)-hydroxy-beta-ionone. It catalyses the reaction all-trans-zeaxanthin + O2 = (3R)-3-hydroxy-10'-apo-beta-carotenal + (3R)-hydroxy-beta-ionone. It carries out the reaction beta-cryptoxanthin + O2 = all-trans-10'-apo-beta-carotenal + (3R)-hydroxy-beta-ionone. The catalysed reaction is all-trans-10'-apo-beta-carotenal + O2 = beta-ionone + 4,9-dimethyldodeca-2,4,6,8,10-pentaenedial. The enzyme catalyses (3R)-3-hydroxy-10'-apo-beta-carotenal + O2 = 4,9-dimethyldodeca-2,4,6,8,10-pentaenedial + (3R)-hydroxy-beta-ionone. It catalyses the reaction (3R,6R)-3-hydroxy-10'-apo-alpha-carotenal + O2 = (3R,6R)-hydroxy-alpha-ionone + 4,9-dimethyldodeca-2,4,6,8,10-pentaenedial. In terms of biological role, broad specificity mitochondrial dioxygenase that mediates the asymmetric oxidative cleavage of carotenoids. Cleaves carotenes (pure hydrocarbon carotenoids) such as all-trans-beta-carotene and lycopene as well as xanthophylls (oxygenated carotenoids) such as zeaxanthin, lutein and beta-cryptoxanthin at both the 9,10 and the 9',10' carbon-carbon double bond. Through its function in carotenoids metabolism regulates oxidative stress and the production of important signaling molecules. The polypeptide is Carotenoid-cleaving dioxygenase, mitochondrial (Pongo abelii (Sumatran orangutan)).